A 467-amino-acid polypeptide reads, in one-letter code: uncharacterized protein (467 aa).

The tract at residues 1–60 (MVRVSRGCQSCVDAKLQSTPSPSPSKSPSPTESPEQCLQKRQSGEQVVLPSRPFPRTSPR) is disordered.

Involved in osmoadaptation. This is an uncharacterized protein from Emericella nidulans (strain FGSC A4 / ATCC 38163 / CBS 112.46 / NRRL 194 / M139) (Aspergillus nidulans).